Consider the following 146-residue polypeptide: Hemoglobin subunit beta (146 aa).

One can recognise a Globin domain in the interval 2 to 146 (HWSAEEKQLI…VAHALARKYH (145 aa)). Residues H63 and H92 each coordinate heme b.

This sequence belongs to the globin family. Heterotetramer of two alpha chains and two beta chains. In terms of tissue distribution, red blood cells.

Functionally, involved in oxygen transport from the lung to the various peripheral tissues. The chain is Hemoglobin subunit beta (HBB) from Psittacula krameri (Rose-ringed parakeet).